Reading from the N-terminus, the 145-residue chain is Large-conductance mechanosensitive channel (145 aa).

The next 3 membrane-spanning stretches (helical) occupy residues 14-34 (VMDLAVGVIIGGAFGGIVKSL), 38-58 (LIMPIVGAIFGGFDFSNYFLP), and 81-101 (GSFLTVLINFLILAWIIFLMV).

It belongs to the MscL family. As to quaternary structure, homopentamer.

It localises to the cell inner membrane. In terms of biological role, channel that opens in response to stretch forces in the membrane lipid bilayer. May participate in the regulation of osmotic pressure changes within the cell. The sequence is that of Large-conductance mechanosensitive channel from Rhizobium etli (strain CIAT 652).